Consider the following 276-residue polypeptide: NADPH-dependent 7-cyano-7-deazaguanine reductase (276 aa).

83–85 serves as a coordination point for substrate; sequence IES. 85–86 is an NADPH binding site; sequence SK. Cys-184 acts as the Thioimide intermediate in catalysis. Asp-191 (proton donor) is an active-site residue. A substrate-binding site is contributed by 223–224; the sequence is HE. 252–253 contacts NADPH; the sequence is RG.

It belongs to the GTP cyclohydrolase I family. QueF type 2 subfamily. In terms of assembly, homodimer.

It localises to the cytoplasm. It carries out the reaction 7-aminomethyl-7-carbaguanine + 2 NADP(+) = 7-cyano-7-deazaguanine + 2 NADPH + 3 H(+). The protein operates within tRNA modification; tRNA-queuosine biosynthesis. Its function is as follows. Catalyzes the NADPH-dependent reduction of 7-cyano-7-deazaguanine (preQ0) to 7-aminomethyl-7-deazaguanine (preQ1). This chain is NADPH-dependent 7-cyano-7-deazaguanine reductase, found in Pseudomonas putida (strain ATCC 700007 / DSM 6899 / JCM 31910 / BCRC 17059 / LMG 24140 / F1).